Here is a 401-residue protein sequence, read N- to C-terminus: 8-amino-7-oxononanoate synthase (401 aa).

Substrate is bound at residue arginine 24. 111–112 (GF) is a pyridoxal 5'-phosphate binding site. Residue histidine 137 participates in substrate binding. 3 residues coordinate pyridoxal 5'-phosphate: serine 183, histidine 211, and threonine 240. Position 243 is an N6-(pyridoxal phosphate)lysine (lysine 243). Threonine 357 contributes to the substrate binding site.

Belongs to the class-II pyridoxal-phosphate-dependent aminotransferase family. BioF subfamily. In terms of assembly, homodimer. Pyridoxal 5'-phosphate is required as a cofactor.

The catalysed reaction is 6-carboxyhexanoyl-[ACP] + L-alanine + H(+) = (8S)-8-amino-7-oxononanoate + holo-[ACP] + CO2. It participates in cofactor biosynthesis; biotin biosynthesis. Catalyzes the decarboxylative condensation of pimeloyl-[acyl-carrier protein] and L-alanine to produce 8-amino-7-oxononanoate (AON), [acyl-carrier protein], and carbon dioxide. The sequence is that of 8-amino-7-oxononanoate synthase from Xanthomonas oryzae pv. oryzae (strain MAFF 311018).